The following is a 256-amino-acid chain: Ubiquinone/menaquinone biosynthesis C-methyltransferase UbiE (256 aa).

The segment covering 1-12 (MTDPRKGDHAEP) has biased composition (basic and acidic residues). The tract at residues 1 to 21 (MTDPRKGDHAEPTTHFGYQDV) is disordered. S-adenosyl-L-methionine is bound by residues threonine 79, aspartate 100, and 128-129 (DA).

Belongs to the class I-like SAM-binding methyltransferase superfamily. MenG/UbiE family.

It catalyses the reaction a 2-demethylmenaquinol + S-adenosyl-L-methionine = a menaquinol + S-adenosyl-L-homocysteine + H(+). The catalysed reaction is a 2-methoxy-6-(all-trans-polyprenyl)benzene-1,4-diol + S-adenosyl-L-methionine = a 5-methoxy-2-methyl-3-(all-trans-polyprenyl)benzene-1,4-diol + S-adenosyl-L-homocysteine + H(+). Its pathway is quinol/quinone metabolism; menaquinone biosynthesis; menaquinol from 1,4-dihydroxy-2-naphthoate: step 2/2. The protein operates within cofactor biosynthesis; ubiquinone biosynthesis. Its function is as follows. Methyltransferase required for the conversion of demethylmenaquinol (DMKH2) to menaquinol (MKH2) and the conversion of 2-polyprenyl-6-methoxy-1,4-benzoquinol (DDMQH2) to 2-polyprenyl-3-methyl-6-methoxy-1,4-benzoquinol (DMQH2). The polypeptide is Ubiquinone/menaquinone biosynthesis C-methyltransferase UbiE (Pseudomonas entomophila (strain L48)).